A 124-amino-acid polypeptide reads, in one-letter code: Urocortin (124 aa).

The signal sequence occupies residues 1 to 25 (MRQAGRAALLAALLLLVQLCPGSSQ). The disordered stretch occupies residues 23 to 46 (SSQRSPEAAGVQDPSLRWSPGARN). Residues 26 to 82 (RSPEAAGVQDPSLRWSPGARNQGGGARALLLLLAERFPRRAGPGRLGLGTAGERPRR) constitute a propeptide that is removed on maturation. Valine amide is present on Val-122.

This sequence belongs to the sauvagine/corticotropin-releasing factor/urotensin I family. As to quaternary structure, interacts with CRHR1 and CRHR2 (via their N-terminal extracellular domain). In terms of tissue distribution, keratinocytes in epidermis and the outer and inner root sheaths of hair follicles, epithelium of sebaceous and sweat glands, erector pili muscle, cutaneous blood vessel walls, cutaneous nerves and dermal mononuclear cells. Detected in plasma cells in the lamia propria in colon mucosa (at protein level). Expressed in pituitary and adrenal glands. Detected in plasma cells in the lamia propria in colon mucosa.

It localises to the secreted. Functionally, acts in vitro to stimulate the secretion of adrenocorticotropic hormone (ACTH). Binds with high affinity to CRF receptor types 1, 2-alpha, and 2-beta. Plays a role in the establishment of normal hearing thresholds. Reduces food intake and regulates ghrelin levels in gastric body and plasma. The sequence is that of Urocortin (UCN) from Homo sapiens (Human).